The primary structure comprises 441 residues: UDP-N-acetylmuramoylalanine--D-glutamate ligase (441 aa).

Residue 129–135 (GTNGKST) participates in ATP binding.

Belongs to the MurCDEF family.

Its subcellular location is the cytoplasm. The catalysed reaction is UDP-N-acetyl-alpha-D-muramoyl-L-alanine + D-glutamate + ATP = UDP-N-acetyl-alpha-D-muramoyl-L-alanyl-D-glutamate + ADP + phosphate + H(+). It functions in the pathway cell wall biogenesis; peptidoglycan biosynthesis. Its function is as follows. Cell wall formation. Catalyzes the addition of glutamate to the nucleotide precursor UDP-N-acetylmuramoyl-L-alanine (UMA). The protein is UDP-N-acetylmuramoylalanine--D-glutamate ligase of Zymomonas mobilis subsp. mobilis (strain ATCC 31821 / ZM4 / CP4).